The sequence spans 281 residues: MSSYAYVTVIYGNNIYLTGALVLGYTLQQTNTKYDRVILATKDVSEEYRSYLKKYYTHIIDIDYVKVNEDIFLEENTRFHDVFTKLSCLSLTQYDKIILLDLDMIIAKNIDHLFKLSAPAACLKRFHIPYGQKIPPKMICSNGKLVGSINAGLMLLEPDKREWEDIKKDIVKENFIGKFKYPEQDYLSLRYCNKWTSITFNYNFQFGLTHRVKKYHYTIDNIYVIHFSSSYKPWNRLNSDKSLREDETDFFDQHIKYYNLWMNIYSKIKHDFSKNDIKLPY.

A helical transmembrane segment spans residues 5 to 27; sequence AYVTVIYGNNIYLTGALVLGYTL.

The protein localises to the membrane. This is an uncharacterized protein from Acanthamoeba polyphaga mimivirus (APMV).